The sequence spans 148 residues: uncharacterized protein (148 aa).

Transmembrane regions (helical) follow at residues 25–45 (FCTVGVGNTLIDFGVFFLLTA), 85–105 (IVRFLMINIAASGITFLLLYL), and 118–138 (LAATIGGMMMNFIGNRIWVFG).

The protein belongs to the GtrA family.

It localises to the cell membrane. This is an uncharacterized protein from Bacillus subtilis (strain 168).